The chain runs to 701 residues: Polyribonucleotide nucleotidyltransferase (701 aa).

Positions 487 and 493 each coordinate Mg(2+). Positions 554-613 (PTMIAMKIDTDKIRDVIGKGGATIRAICEETKASIDIEDDGSIKIFGESKEAAEAARQRV) constitute a KH domain. Positions 623–691 (GKIYLGKVER…NRGRIKLSIK (69 aa)) constitute an S1 motif domain.

This sequence belongs to the polyribonucleotide nucleotidyltransferase family. Component of the RNA degradosome, which is a multiprotein complex involved in RNA processing and mRNA degradation. Mg(2+) is required as a cofactor.

Its subcellular location is the cytoplasm. It catalyses the reaction RNA(n+1) + phosphate = RNA(n) + a ribonucleoside 5'-diphosphate. Its function is as follows. Involved in mRNA degradation. Catalyzes the phosphorolysis of single-stranded polyribonucleotides processively in the 3'- to 5'-direction. This is Polyribonucleotide nucleotidyltransferase from Pseudomonas syringae pv. tomato (strain ATCC BAA-871 / DC3000).